A 281-amino-acid chain; its full sequence is MTARALHYVFKVANRAKTIDFFTNVLNMKVLRHEEFEKGCEATCNGPYNGRWSKTMIGYGSEDEHFVLEITYNYPIHKYELGNDYRAIVIDSDQLFEKVEKINHRKSGCGRLAVKDPDGHEFKIGKADQSPKVLRVQVNVGDLEKSKKYWNETLGMPIVEEKSSRIRMSYGDGQCELEIVKSQDKIDRKTGFGRIAFSYPEDKLESLQDKIKSANGTIINELTTLETPGKADVQVVILADPDEHEICFVGDEGFRALSKIDDKAESELKEQIKKDDSEKWI.

VOC domains follow at residues 4 to 127 and 132 to 251; these read RALH…IGKA and KVLR…FVGD.

This sequence belongs to the glyoxalase I family. In terms of tissue distribution, expressed in the following tissues in both larvae and adults: pharynx, pharyngeal-intestinal valve, intestine, anal sphincter, vulval muscle, seam cells and the nervous system.

Functionally, thought to act as a glyoxalase. May remove methylglyoxal from mitochondrial proteins. Has roles in reducing oxidative stress and increasing lifespan. This Caenorhabditis elegans protein is Glyoxalase 1 (glod-4).